Reading from the N-terminus, the 179-residue chain is Stress response regulator gls24 homolog (179 aa).

The tract at residues 147-179 (TSEFTSHQVENVKASVDNGVEKLQDQKAEPRVK) is disordered. A compositionally biased stretch (basic and acidic residues) spans 165–179 (GVEKLQDQKAEPRVK).

The protein belongs to the asp23 family.

This chain is Stress response regulator gls24 homolog, found in Streptococcus pyogenes serotype M28 (strain MGAS6180).